The sequence spans 473 residues: Ribosomal RNA small subunit methyltransferase F (473 aa).

Residues 124 to 130 (ASAPGSK), E148, D175, and D193 contribute to the S-adenosyl-L-methionine site. The active-site Nucleophile is the C246.

It belongs to the class I-like SAM-binding methyltransferase superfamily. RsmB/NOP family.

The protein resides in the cytoplasm. It catalyses the reaction cytidine(1407) in 16S rRNA + S-adenosyl-L-methionine = 5-methylcytidine(1407) in 16S rRNA + S-adenosyl-L-homocysteine + H(+). Specifically methylates the cytosine at position 1407 (m5C1407) of 16S rRNA. This is Ribosomal RNA small subunit methyltransferase F from Aliivibrio fischeri (strain MJ11) (Vibrio fischeri).